The sequence spans 122 residues: Large ribosomal subunit protein uL14 (122 aa).

Belongs to the universal ribosomal protein uL14 family. Part of the 50S ribosomal subunit. Forms a cluster with proteins L3 and L19. In the 70S ribosome, L14 and L19 interact and together make contacts with the 16S rRNA in bridges B5 and B8.

Its function is as follows. Binds to 23S rRNA. Forms part of two intersubunit bridges in the 70S ribosome. The protein is Large ribosomal subunit protein uL14 of Oenococcus oeni (strain ATCC BAA-331 / PSU-1).